The chain runs to 193 residues: Homeobox protein HD-12 (193 aa).

The homeobox; TALE-type DNA-binding region spans 123–185 (SVIRRINFPK…NARRRILPFM (63 aa)).

This sequence belongs to the TALE/KNOX homeobox family.

The protein resides in the nucleus. The sequence is that of Homeobox protein HD-12 (HD-12) from Encephalitozoon cuniculi (strain GB-M1) (Microsporidian parasite).